Reading from the N-terminus, the 940-residue chain is Isoleucine--tRNA ligase (940 aa).

The 'HIGH' region signature appears at 58–68 (PYANGSIHIGH). Glu-564 lines the L-isoleucyl-5'-AMP pocket. The 'KMSKS' region motif lies at 605-609 (KMSKS). An ATP-binding site is contributed by Lys-608. Residues Cys-903, Cys-906, Cys-923, and Cys-926 each contribute to the Zn(2+) site.

This sequence belongs to the class-I aminoacyl-tRNA synthetase family. IleS type 1 subfamily. Monomer. The cofactor is Zn(2+).

It is found in the cytoplasm. The enzyme catalyses tRNA(Ile) + L-isoleucine + ATP = L-isoleucyl-tRNA(Ile) + AMP + diphosphate. In terms of biological role, catalyzes the attachment of isoleucine to tRNA(Ile). As IleRS can inadvertently accommodate and process structurally similar amino acids such as valine, to avoid such errors it has two additional distinct tRNA(Ile)-dependent editing activities. One activity is designated as 'pretransfer' editing and involves the hydrolysis of activated Val-AMP. The other activity is designated 'posttransfer' editing and involves deacylation of mischarged Val-tRNA(Ile). The polypeptide is Isoleucine--tRNA ligase (Shewanella baltica (strain OS185)).